The chain runs to 145 residues: Large ribosomal subunit protein uL11 (145 aa).

The protein belongs to the universal ribosomal protein uL11 family. Part of the ribosomal stalk of the 50S ribosomal subunit. Interacts with L10 and the large rRNA to form the base of the stalk. L10 forms an elongated spine to which L12 dimers bind in a sequential fashion forming a multimeric L10(L12)X complex. One or more lysine residues are methylated.

Forms part of the ribosomal stalk which helps the ribosome interact with GTP-bound translation factors. This chain is Large ribosomal subunit protein uL11, found in Francisella philomiragia subsp. philomiragia (strain ATCC 25017 / CCUG 19701 / FSC 153 / O#319-036).